A 329-amino-acid chain; its full sequence is Glycerol-3-phosphate dehydrogenase [NAD(P)+] (329 aa).

Residues Trp-11, Arg-30, and Lys-103 each contribute to the NADPH site. Sn-glycerol 3-phosphate is bound by residues Lys-103, Gly-132, and Ser-134. Ala-136 lines the NADPH pocket. 5 residues coordinate sn-glycerol 3-phosphate: Lys-187, Asp-240, Ser-250, Arg-251, and Asn-252. The active-site Proton acceptor is the Lys-187. Arg-251 lines the NADPH pocket. NADPH-binding residues include Val-275 and Glu-277.

Belongs to the NAD-dependent glycerol-3-phosphate dehydrogenase family.

It localises to the cytoplasm. The catalysed reaction is sn-glycerol 3-phosphate + NAD(+) = dihydroxyacetone phosphate + NADH + H(+). It carries out the reaction sn-glycerol 3-phosphate + NADP(+) = dihydroxyacetone phosphate + NADPH + H(+). It functions in the pathway membrane lipid metabolism; glycerophospholipid metabolism. Its function is as follows. Catalyzes the reduction of the glycolytic intermediate dihydroxyacetone phosphate (DHAP) to sn-glycerol 3-phosphate (G3P), the key precursor for phospholipid synthesis. This Dechloromonas aromatica (strain RCB) protein is Glycerol-3-phosphate dehydrogenase [NAD(P)+].